The following is a 707-amino-acid chain: Caprin-1 (707 aa).

2 stretches are compositionally biased toward low complexity: residues 1-15 (MPSA…SKSS) and 22-43 (GSSG…PATG). Residues 1–48 (MPSATSHSGSGSKSSGPPPPSGSSGSEAAAGAAAPASQHPATGTGAVQ) are disordered. At P2 the chain carries N-acetylproline. S10 is modified (phosphoserine). Residues 58 to 92 (VIDKKLRNLEKKKGKLDDYQERMNKGERLNQDQLD) are a coiled coil. S113 bears the Phosphoserine mark. Positions 123–151 (KTIKKTARREQLMREEAEQKRLKTVLELQ) form a coiled coil. R163 carries the post-translational modification Omega-N-methylarginine. Residues 325–335 (LQQQPQAASPS) are compositionally biased toward low complexity. Residues 325–347 (LQQQPQAASPSVPEPHSLTPVAQ) are disordered. S333 and S341 each carry phosphoserine. The tract at residues 358-379 (QDLMAQMQGPYNFIQDSMLDFE) is G3BP1-binding. Disordered stretches follow at residues 412–496 (ESRL…AGTS), 526–558 (PANE…EQTE), and 570–707 (TYHG…QQVN). Residues 431–452 (PLVSSTSEGYTASQPLYQPSHA) are compositionally biased toward polar residues. Residues 453-462 (TEQRPQKEPM) are compositionally biased toward basic and acidic residues. Over residues 465-474 (IQATISLNTD) the composition is skewed to polar residues. Over residues 475 to 489 (QTTASSSLPAASQPQ) the composition is skewed to low complexity. Polar residues-rich tracts occupy residues 533–552 (LKQQ…SQPH) and 572–603 (HGSQ…QPYY). The residue at position 623 (Y623) is a Phosphotyrosine. Omega-N-methylarginine is present on residues R624 and R631. A phosphotyrosine mark is found at Y634 and Y637. R638 is modified (omega-N-methylarginine). Positions 640–655 (SFSNTPNSGYSQSQFT) are enriched in polar residues. S642 and S647 each carry an O-linked (GlcNAc) serine glycan. Phosphotyrosine occurs at positions 649, 660, 663, and 668. Low complexity-rich tracts occupy residues 674–684 (RGSGQSGPRGA) and 695–707 (NRGM…QQVN). Position 696 is an asymmetric dimethylarginine; alternate (R696). Position 696 is an omega-N-methylarginine; alternate (R696).

It belongs to the caprin family. As to quaternary structure, may form homomultimers. Interacts with G3BP1; interaction is direct and promotes stress granule formation. Interacts with G3BP2; interaction is direct and promotes stress granule formation. Interacts with PQBP1. Interacts with DDX3X. Interacts (when phosphorylated by EPHA4) with FMR1; interaction with FMR1 promotes formation of a membraneless compartment. Post-translationally, tyrosine phosphorylation by EPHA4 promotes interaction with FMR1 and liquid-liquid phase separation (LLPS) for the formation of a membraneless compartment that concentrates mRNAs with associated regulatory factors. O-glycosylated (O-GlcNAcylated), in a cell cycle-dependent manner. O-glycosylation by OGT inhibit ability to undergo liquid-liquid phase separation (LLPS). Highest expression in thymus, spleen and brain (at protein level). Lower levels in kidney, muscle and liver (at protein level).

Its subcellular location is the cytoplasm. The protein resides in the cytoplasmic ribonucleoprotein granule. It localises to the cytosol. It is found in the cell projection. The protein localises to the dendrite. Its subcellular location is the lamellipodium. Its activity is regulated as follows. Ability to mediate liquid-liquid phase separation is regulated by ATP: moderate concentrations of ATP enhance phase separation, whereas high concentrations of ATP lead to inhibition of phase separation. MRNA-binding protein that acts as a regulator of mRNAs transport, translation and/or stability, and which is involved in neurogenesis, synaptic plasticity in neurons and cell proliferation and migration in multiple cell types. Plays an essential role in cytoplasmic stress granule formation. Acts as an mRNA regulator by mediating formation of some phase-separated membraneless compartment: undergoes liquid-liquid phase separation upon binding to target mRNAs, leading to assemble mRNAs into cytoplasmic ribonucleoprotein granules that concentrate mRNAs with associated regulatory factors. Undergoes liquid-liquid phase separation following phosphorylation and interaction with FMR1, promoting formation of cytoplasmic ribonucleoprotein granules that concentrate mRNAs with factors that inhibit translation and mediate deadenylation of target mRNAs. In these cytoplasmic ribonucleoprotein granules, CAPRIN1 mediates recruitment of CNOT7 deadenylase, leading to mRNA deadenylation and degradation. Binds directly and selectively to MYC and CCND2 mRNAs. In neuronal cells, directly binds to several mRNAs associated with RNA granules, including BDNF, CAMK2A, CREB1, MAP2, NTRK2 mRNAs, as well as to GRIN1 and KPNB1 mRNAs, but not to rRNAs. The sequence is that of Caprin-1 (Caprin1) from Mus musculus (Mouse).